The sequence spans 64 residues: Conotoxin Cal12.4 (64 aa).

The signal sequence occupies residues 1 to 21 (MKLTCMLVVLLLVLPFGDLIA).

The protein belongs to the conotoxin O1 superfamily. In terms of processing, contains 4 disulfide bonds. As to expression, expressed by the venom duct.

The protein resides in the secreted. Functionally, probable neurotoxin. This is Conotoxin Cal12.4 from Californiconus californicus (California cone).